Reading from the N-terminus, the 292-residue chain is Peroxisomal 2,4-dienoyl-CoA reductase [(3E)-enoyl-CoA-producing] (292 aa).

At Ala2 the chain carries N-acetylalanine. NADP(+) is bound by residues 35-40 (GGGSGI), 60-64 (RSLPR), and Asp86. Arg60 lines the substrate pocket. Substrate-binding positions include Arg88, Phe118, and 126 to 128 (SFN). Lys151 bears the N6-acetyllysine mark. NADP(+) is bound by residues Lys182 and 208-214 (PGPISGT). Arg219 lines the substrate pocket. The residue at position 287 (Ser287) is a Phosphoserine. The short motif at 290-292 (AKL) is the Microbody targeting signal element. N6-acetyllysine is present on Lys291.

Belongs to the short-chain dehydrogenases/reductases (SDR) family. 2,4-dienoyl-CoA reductase subfamily. In terms of assembly, monomer, dimer and oligomer.

The protein resides in the peroxisome. It carries out the reaction a (2E,4Z)-dienoyl-CoA + NADPH + H(+) = a 4,5-saturated-(3E)-enoyl-CoA + NADP(+). It catalyses the reaction a (2E,4E)-dienoyl-CoA + NADPH + H(+) = a 4,5-saturated-(3E)-enoyl-CoA + NADP(+). The enzyme catalyses (2E,4E)-hexadienoyl-CoA + NADPH + H(+) = (3E)-hexenoyl-CoA + NADP(+). The catalysed reaction is (2E,4E)-decadienoyl-CoA + NADPH + H(+) = (3E)-decenoyl-CoA + NADP(+). It carries out the reaction (2E,4Z,7Z,10Z,13Z,16Z,19Z)-docosaheptaenoyl-CoA + NADPH + H(+) = (3E,7Z,10Z,13Z,16Z,19Z)-docosahexaenoyl-CoA + NADP(+). Functionally, auxiliary enzyme of beta-oxidation. Participates in the degradation of unsaturated fatty enoyl-CoA esters having double bonds in both even- and odd-numbered positions in peroxisome. Catalyzes the NADP-dependent reduction of 2,4-dienoyl-CoA to yield trans-3-enoyl-CoA. Has activity towards short and medium chain 2,4-dienoyl-CoAs, but also towards 2,4,7,10,13,16,19-docosaheptaenoyl-CoA, suggesting that it does not constitute a rate limiting step in the peroxisomal degradation of docosahexaenoic acid. The chain is Peroxisomal 2,4-dienoyl-CoA reductase [(3E)-enoyl-CoA-producing] (DECR2) from Pongo abelii (Sumatran orangutan).